Consider the following 470-residue polypeptide: Meiosis-specific with OB domain-containing protein (470 aa).

A DNA-binding region (OB) is located at residues 167 to 272; sequence IINVLAAVRS…EANILLNFIR (106 aa).

It belongs to the MEIOB family. In terms of assembly, component of a multiprotein complex with RPA2 and SPATA22. Interacts with SPATA22. Interacts with the complex BRME1:HSF2BP:BRCA2.

The protein resides in the cytoplasm. Its subcellular location is the nucleus. It is found in the chromosome. Single-stranded DNA-binding protein required for homologous recombination in meiosis I. Required for double strand breaks (DSBs) repair and crossover formation and promotion of faithful and complete synapsis. Not required for the initial loading of recombinases but required to maintain a proper number of RAD51 and DMC1 foci after the zygotene stage. May act by ensuring the stabilization of recombinases, which is required for successful homology search and meiotic recombination. Displays Single-stranded DNA 3'-5' exonuclease activity in vitro. This chain is Meiosis-specific with OB domain-containing protein, found in Rattus norvegicus (Rat).